Reading from the N-terminus, the 101-residue chain is Small ribosomal subunit protein uS14 (101 aa).

Belongs to the universal ribosomal protein uS14 family. In terms of assembly, part of the 30S ribosomal subunit. Contacts proteins S3 and S10.

Functionally, binds 16S rRNA, required for the assembly of 30S particles and may also be responsible for determining the conformation of the 16S rRNA at the A site. This is Small ribosomal subunit protein uS14 from Aromatoleum aromaticum (strain DSM 19018 / LMG 30748 / EbN1) (Azoarcus sp. (strain EbN1)).